Here is a 234-residue protein sequence, read N- to C-terminus: Proteasome subunit alpha type-2 (234 aa).

Ala-2 is modified (N-acetylalanine). Tyr-121 is subject to Phosphotyrosine.

The protein belongs to the peptidase T1A family. As to quaternary structure, the 26S proteasome consists of a 20S proteasome core and two 19S regulatory subunits. The 20S proteasome core is composed of 28 subunits that are arranged in four stacked rings, resulting in a barrel-shaped structure. The two end rings are each formed by seven alpha subunits, and the two central rings are each formed by seven beta subunits. The catalytic chamber with the active sites is on the inside of the barrel.

The protein localises to the cytoplasm. Its subcellular location is the nucleus. Functionally, the proteasome is a multicatalytic proteinase complex which is characterized by its ability to cleave peptides with Arg, Phe, Tyr, Leu, and Glu adjacent to the leaving group at neutral or slightly basic pH. The proteasome has an ATP-dependent proteolytic activity. PSMA2 may have a potential regulatory effect on another component(s) of the proteasome complex through tyrosine phosphorylation. The chain is Proteasome subunit alpha type-2 (psma2) from Carassius auratus (Goldfish).